The following is a 117-amino-acid chain: MGSTAILALLLAVLQGVCAEVQLVQSGAEVKKPGESLRISCKGSGYSFTSYWISWVRQMPGKGLEWMGRIDPSDSYTNYSPSFQGHVTISADKSISTAYLQWSSLKASDTAMYYCAR.

Positions 1–19 (MGSTAILALLLAVLQGVCA) are cleaved as a signal peptide. Residues 20 to 44 (EVQLVQSGAEVKKPGESLRISCKGS) are framework-1. The Ig-like domain maps to 20-117 (EVQLVQSGAE…SDTAMYYCAR (98 aa)). A disulfide bridge connects residues cysteine 41 and cysteine 115. A complementarity-determining-1 region spans residues 45–52 (GYSFTSYW). A framework-2 region spans residues 53 to 69 (ISWVRQMPGKGLEWMGR). The tract at residues 70-77 (IDPSDSYT) is complementarity-determining-2. Positions 78–115 (NYSPSFQGHVTISADKSISTAYLQWSSLKASDTAMYYC) are framework-3. Residues 116–117 (AR) form a complementarity-determining-3 region.

Immunoglobulins are composed of two identical heavy chains and two identical light chains; disulfide-linked.

The protein localises to the secreted. Its subcellular location is the cell membrane. V region of the variable domain of immunoglobulin heavy chains that participates in the antigen recognition. Immunoglobulins, also known as antibodies, are membrane-bound or secreted glycoproteins produced by B lymphocytes. In the recognition phase of humoral immunity, the membrane-bound immunoglobulins serve as receptors which, upon binding of a specific antigen, trigger the clonal expansion and differentiation of B lymphocytes into immunoglobulins-secreting plasma cells. Secreted immunoglobulins mediate the effector phase of humoral immunity, which results in the elimination of bound antigens. The antigen binding site is formed by the variable domain of one heavy chain, together with that of its associated light chain. Thus, each immunoglobulin has two antigen binding sites with remarkable affinity for a particular antigen. The variable domains are assembled by a process called V-(D)-J rearrangement and can then be subjected to somatic hypermutations which, after exposure to antigen and selection, allow affinity maturation for a particular antigen. The protein is Immunoglobulin heavy variable 5-10-1 of Homo sapiens (Human).